Consider the following 369-residue polypeptide: MKSGRFIGVMSGTSLDGVDVVLATIDEHRVAQLASLSWPIPVSLKQAVLDICQGQQLTLSQFGQLDTQLGRLFADAVNALLKEQNLQARDIVAIGCHGQTVWHEPTGVAPHTLQIGDNNQIVARTGITVVGDFRRRDIALGGQGAPLVPAFHHALLAHPTERRMVLNIGGIANLSLLIPGQPVGGYDTGPGNMLMDAWIWRQAGKPYDKDAEWARAGKVILPLLQNMLSDPYFSQPAPKSTGREYFNYGWLERHLRHFPGVDPRDVQATLAELTAVTISEQVLLSGGCERLMVCGGGSRNPLLMARLAALLPGTEVTTTDAVGISGDDMEALAFAWLAWRTLAGLPGNLPSVTGASQETVLGAIFPANP.

An ATP-binding site is contributed by 12–19; the sequence is GTSLDGVD.

It belongs to the anhydro-N-acetylmuramic acid kinase family.

It carries out the reaction 1,6-anhydro-N-acetyl-beta-muramate + ATP + H2O = N-acetyl-D-muramate 6-phosphate + ADP + H(+). It participates in amino-sugar metabolism; 1,6-anhydro-N-acetylmuramate degradation. It functions in the pathway cell wall biogenesis; peptidoglycan recycling. Its function is as follows. Catalyzes the specific phosphorylation of 1,6-anhydro-N-acetylmuramic acid (anhMurNAc) with the simultaneous cleavage of the 1,6-anhydro ring, generating MurNAc-6-P. Is required for the utilization of anhMurNAc either imported from the medium or derived from its own cell wall murein, and thus plays a role in cell wall recycling. The chain is Anhydro-N-acetylmuramic acid kinase from Shigella boydii serotype 18 (strain CDC 3083-94 / BS512).